A 314-amino-acid chain; its full sequence is Transcription factor DICHOTOMA (314 aa).

The TCP domain maps to 87–145 (KKDRHSKINRPQGPRDRRVRLSIGIARKFFDLQEMLGFDKPSKTLDWLLTKSKEAIKEL). The R domain maps to 201 to 218 (KESRAKARARARERTKEK).

The protein localises to the nucleus. Functionally, transcription regulator involved in the dorsovental asymmetry of flowers. Promotes dorsal identity. This is Transcription factor DICHOTOMA (DICH) from Antirrhinum majus (Garden snapdragon).